The primary structure comprises 457 residues: MMGDLTTSFPATTLTTNDQPHVVVCSGAGMGHLTPFLNLASALSSAPYNCKVTLLIVIPLITDAESHHISSFFSSHPTIHRLDFHVNLPAPKPNVDPFFLRYKSISDSAHRLPVHLSALSPPISAVFSDFLFTQGLNTTLPHLPNYTFTTTSARFFTLMSYVPHLAKSSSSSPVEIPGLEPFPTDNIPPPFFNPEHIFTSFTISNAKYFSLSKGILVNTFDSFEPETLSALNSGDTLSDLPPVIPIGPLNELEHNKQEELLPWLDQQPEKSVLYVSFGNRTAMSSDQILELGMGLERSDCRFIWVVKTSKIDKDDKSELRKLFGEELYLKLSEKGKLVKWVNQTEILGHTAVGGFLSHCGWNSVMEAARRGVPILAWPQHGDQRENAWVVEKAGLGVWEREWASGIQAAIVEKVKMIMGNNDLRKSAMKVGEEAKRACDVGGSSATALMNIIGSLKR.

Glycine 31 contacts UDP-alpha-D-glucose. Histidine 32 (proton acceptor) is an active-site residue. Histidine 32 serves as a coordination point for an anthocyanidin. Threonine 34 lines the UDP-alpha-D-glucose pocket. Position 94 (asparagine 94) interacts with an anthocyanidin. The active-site Charge relay is aspartate 129. A UDP-alpha-D-glucose-binding site is contributed by threonine 150. The interval 279 to 280 (NR) is UDP. UDP-alpha-D-glucose contacts are provided by valine 341, glutamine 343, histidine 358, tryptophan 361, asparagine 362, serine 363, and glutamate 366. Position 381 (glycine 381) interacts with an anthocyanidin. Residues aspartate 382 and glutamine 383 each coordinate UDP-alpha-D-glucose.

The protein belongs to the UDP-glycosyltransferase family. As to expression, expressed in cotyledons. Not detected in flowers, leaves, roots and hypocotyls.

It carries out the reaction a 3'-hydro-2'-hydroxy-beta-oxodihydrochalcone + UDP-alpha-D-glucose = a 3'-(beta-D-glucopyranosyl)-2'-hydroxy-beta-oxodihydrochalcone + UDP + H(+). Its function is as follows. UDP-glucose-dependent glucosyltransferase catalyzing the C-glucosylation of 2-hydroxyflavanones (2-hydroxynaringenin, 2-hydroxyeriodictyol and 2-hydroxypinocembrin) and phloretin. No activity with flavanones, flavones or flavonols. Exhibits C-glycosylation activity toward 2',4',6'-trihydroxyacetophenone and phloretin using UDP-glucose as sugar donor. Can use UDP-galactose as sugar donor, but catalytic efficiency is 14-fold lower toward UDP-galactose than toward UDP-glucose. This is UDP-glycosyltransferase 708C1 from Fagopyrum esculentum (Common buckwheat).